Reading from the N-terminus, the 462-residue chain is 3-ketoacyl-CoA thiolase 2, peroxisomal (462 aa).

The transit peptide at Met1–Cys34 directs the protein to the peroxisome. Residue Cys138 is the Acyl-thioester intermediate of the active site. The cysteines at positions 138 and 192 are disulfide-linked. Active-site proton acceptor residues include His393 and Cys425.

It belongs to the thiolase-like superfamily. Thiolase family. In terms of assembly, forms homodimers. In terms of tissue distribution, accumulates in etiolated cotyledons and in seedlings, also present in roots, flowers and siliques (at protein level). High levels in wounded leaves.

The protein localises to the peroxisome. It localises to the glyoxysome. It catalyses the reaction an acyl-CoA + acetyl-CoA = a 3-oxoacyl-CoA + CoA. The protein operates within lipid metabolism; fatty acid metabolism. Involved in long chain fatty-acid beta-oxidation prior to gluconeogenesis during germination and subsequent seedling growth. Confers sensitivity to 2,4-dichlorophenoxybutiric acid (2,4-DB). Required for local and systemic induction of jasmonic acid (JA) biosynthesis after wounding. Seems to be involved in JA biosynthesis during senescence. May be involved in the positive regulation of abscisic acid-activated signaling pathway. The chain is 3-ketoacyl-CoA thiolase 2, peroxisomal (PED1) from Arabidopsis thaliana (Mouse-ear cress).